The following is a 230-amino-acid chain: Thiamine-triphosphatase (230 aa).

Alanine 2 carries the post-translational modification N-acetylalanine. Residues 5–201 (LIEVERKFLP…AKLIVYLQRF (197 aa)) form the CYTH domain. 2 residues coordinate Mg(2+): glutamate 7 and glutamate 9. Substrate-binding residues include lysine 11, arginine 55, arginine 57, lysine 65, and arginine 125. Mg(2+) is bound by residues aspartate 145, glutamate 157, and glutamate 159. Position 157 (glutamate 157) interacts with substrate. Lysine 193 lines the substrate pocket.

Belongs to the ThTPase family. In terms of assembly, monomer. Mg(2+) serves as cofactor.

The protein resides in the cytoplasm. It carries out the reaction thiamine triphosphate + H2O = thiamine diphosphate + phosphate + H(+). Functionally, hydrolase highly specific for thiamine triphosphate (ThTP). The protein is Thiamine-triphosphatase (THTPA) of Macaca fascicularis (Crab-eating macaque).